Reading from the N-terminus, the 570-residue chain is Low-affinity glucose transporter HXT1 (570 aa).

Positions 1-20 are enriched in polar residues; the sequence is MNSTPDLISPQKSNSSNSYE. Residues 1 to 51 are disordered; that stretch reads MNSTPDLISPQKSNSSNSYELESGRSKAMNTPEGKNESFHDNLSESQVQPA. Over 1–60 the chain is Cytoplasmic; the sequence is MNSTPDLISPQKSNSSNSYELESGRSKAMNTPEGKNESFHDNLSESQVQPAVAPPNTGKG. Phosphoserine is present on residues serine 23, serine 38, and serine 44. Residues 34 to 43 are compositionally biased toward basic and acidic residues; sequence GKNESFHDNL. Residues 61 to 81 traverse the membrane as a helical segment; sequence VYVTVSICCVMVAFGGFIFGW. Topologically, residues 82-116 are extracellular; it reads DTGTISGFVAQTDFLRRFGMKHHDGSHYLSKVRTG. The chain crosses the membrane as a helical span at residues 117–137; that stretch reads LIVSIFNIGCAIGGIVLAKLG. Over 138 to 143 the chain is Cytoplasmic; sequence DMYGRR. The helical transmembrane segment at 144–164 threads the bilayer; the sequence is IGLIVVVVIYTIGIIIQIASI. Residues 165–174 are Extracellular-facing; that stretch reads NKWYQYFIGR. A helical transmembrane segment spans residues 175–195; that stretch reads IISGLGVGGITVLSPMLISEV. The Cytoplasmic segment spans residues 196-201; the sequence is APSEMR. A helical membrane pass occupies residues 202 to 222; that stretch reads GTLVSCYQVMITLGIFLGYCT. The Extracellular portion of the chain corresponds to 223–236; that stretch reads NFGTKNYSNSVQWR. The N-linked (GlcNAc...) asparagine glycan is linked to asparagine 228. A helical membrane pass occupies residues 237–257; it reads VPLGLCFAWALFMIGGMMFVP. Residues 258–340 are Cytoplasmic-facing; it reads ESPRYLVEAG…IQSLQQLTGD (83 aa). The helical transmembrane segment at 341–357 threads the bilayer; sequence NYFFYYGTIVFQAVGLS. The Extracellular segment spans residues 358–363; sequence DSFETS. Residues 364–381 form a helical membrane-spanning segment; that stretch reads IVFGVVNFFSTCCSLYTV. Residues 382–388 are Cytoplasmic-facing; it reads DRFGRRN. A helical membrane pass occupies residues 389 to 409; sequence CLMWGAVGMVCCYVVYASVGV. Topologically, residues 410-431 are extracellular; that stretch reads TRLWPNGQDQPSSKGAGNCMIV. A helical transmembrane segment spans residues 432–452; sequence FACFYIFCFATTWAPIAYVVI. The Cytoplasmic segment spans residues 453–469; the sequence is SECFPLRVKSKCMSIAS. A helical transmembrane segment spans residues 470–490; it reads AANWIWGFLISFFTPFITGAI. Position 491 (asparagine 491) is a topological domain, extracellular. The chain crosses the membrane as a helical span at residues 492-512; sequence FYYGYVFMGCMVFAYFYVFFF. The Cytoplasmic segment spans residues 513–570; that stretch reads VPETKGLSLEEVNDMYAEGVLPWKSASWVPVSKRGADYNADDLMHDDQPFYKSLFSRK.

Belongs to the major facilitator superfamily. Sugar transporter (TC 2.A.1.1) family.

Its subcellular location is the membrane. Low-affinity glucose transporter. HXT1 is as well involved in the transport of mannose. In Saccharomyces cerevisiae (strain ATCC 204508 / S288c) (Baker's yeast), this protein is Low-affinity glucose transporter HXT1 (HXT1).